Here is a 153-residue protein sequence, read N- to C-terminus: UPF0540 protein At1g62220 (153 aa).

The signal sequence occupies residues 1–21 (MNATKFVVLLVISVLCAIVTA). Disordered stretches follow at residues 63–82 (SSAT…YENG) and 122–153 (ARAN…GKKD). Over residues 122 to 132 (ARANGKVASAS) the composition is skewed to low complexity. Positions 141–153 (KKGKGKKGKGKKD) are enriched in basic residues.

This sequence belongs to the UPF0540 family.

In Arabidopsis thaliana (Mouse-ear cress), this protein is UPF0540 protein At1g62220.